Here is an 803-residue protein sequence, read N- to C-terminus: Ras GTPase-activating protein 4 (803 aa).

2 C2 domains span residues 1 to 105 (MAKR…SGWA) and 116 to 232 (VQGE…EGWF). The Ca(2+) site is built by Asp-21, Asp-27, Asp-74, Asp-76, Ser-79, Asp-82, Asp-149, Asp-155, Asp-202, Asp-204, Ser-207, and Asp-210. The 229-residue stretch at 318-546 (GLAKDFLDLL…AQLKDFITKL (229 aa)) folds into the Ras-GAP domain. The PH domain occupies 566 to 673 (PPVKEGPLFI…WLSALRKVSI (108 aa)). The Btk-type zinc-finger motif lies at 675-711 (NTGLLGSYHPGVFRGDKWSCCHQKEKTGQGCDKTRSR). Zn(2+)-binding residues include His-683, Cys-694, Cys-695, and Cys-705. The segment at 781–803 (EAHSSSPAGSPPSEPNCLLELQT) is disordered.

Ca(2+) serves as cofactor. As to expression, widely expressed.

It localises to the cytoplasm. The protein localises to the cytosol. Its subcellular location is the cell membrane. In terms of biological role, ca(2+)-dependent Ras GTPase-activating protein, that switches off the Ras-MAPK pathway following a stimulus that elevates intracellular calcium. Functions as an adaptor for Cdc42 and Rac1 during FcR-mediated phagocytosis. The chain is Ras GTPase-activating protein 4 (RASA4) from Homo sapiens (Human).